Here is a 29-residue protein sequence, read N- to C-terminus: Varv peptide E (29 aa).

A cross-link (cyclopeptide (Gly-Asn)) is located at residues 1 to 29 (GLPICGETCVGGTCNTPGCSCSWPVCTRN). 3 cysteine pairs are disulfide-bonded: Cys-5–Cys-19, Cys-9–Cys-21, and Cys-14–Cys-26.

Post-translationally, this is a cyclic peptide.

Functionally, probably participates in a plant defense mechanism. Has cytotoxic activity against human lymphoma U-937 GTB and human myeloma RPMI-8226/s cell lines. The protein is Varv peptide E of Viola arvensis (European field pansy).